The following is a 155-amino-acid chain: SsrA-binding protein (155 aa).

The span at 135–147 shows a compositional bias: basic and acidic residues; that stretch reads TIKRRDQERDIKK. The interval 135–155 is disordered; sequence TIKRRDQERDIKKQMKHYNAR.

This sequence belongs to the SmpB family.

It is found in the cytoplasm. Its function is as follows. Required for rescue of stalled ribosomes mediated by trans-translation. Binds to transfer-messenger RNA (tmRNA), required for stable association of tmRNA with ribosomes. tmRNA and SmpB together mimic tRNA shape, replacing the anticodon stem-loop with SmpB. tmRNA is encoded by the ssrA gene; the 2 termini fold to resemble tRNA(Ala) and it encodes a 'tag peptide', a short internal open reading frame. During trans-translation Ala-aminoacylated tmRNA acts like a tRNA, entering the A-site of stalled ribosomes, displacing the stalled mRNA. The ribosome then switches to translate the ORF on the tmRNA; the nascent peptide is terminated with the 'tag peptide' encoded by the tmRNA and targeted for degradation. The ribosome is freed to recommence translation, which seems to be the essential function of trans-translation. The chain is SsrA-binding protein from Streptococcus pyogenes serotype M3 (strain SSI-1).